The chain runs to 93 residues: Small ribosomal subunit protein uS19 (93 aa).

The protein belongs to the universal ribosomal protein uS19 family.

Functionally, protein S19 forms a complex with S13 that binds strongly to the 16S ribosomal RNA. This is Small ribosomal subunit protein uS19 from Clostridium acetobutylicum (strain ATCC 824 / DSM 792 / JCM 1419 / IAM 19013 / LMG 5710 / NBRC 13948 / NRRL B-527 / VKM B-1787 / 2291 / W).